The sequence spans 957 residues: Isoleucine--tRNA ligase (957 aa).

A 'HIGH' region motif is present at residues Pro57 to His67. Residue Glu594 participates in L-isoleucyl-5'-AMP binding. The 'KMSKS' region signature appears at Lys635–Ser639. Lys638 is an ATP binding site. Residues Cys920, Cys923, Cys940, and Cys943 each coordinate Zn(2+).

It belongs to the class-I aminoacyl-tRNA synthetase family. IleS type 1 subfamily. Monomer. The cofactor is Zn(2+).

It localises to the cytoplasm. It catalyses the reaction tRNA(Ile) + L-isoleucine + ATP = L-isoleucyl-tRNA(Ile) + AMP + diphosphate. Functionally, catalyzes the attachment of isoleucine to tRNA(Ile). As IleRS can inadvertently accommodate and process structurally similar amino acids such as valine, to avoid such errors it has two additional distinct tRNA(Ile)-dependent editing activities. One activity is designated as 'pretransfer' editing and involves the hydrolysis of activated Val-AMP. The other activity is designated 'posttransfer' editing and involves deacylation of mischarged Val-tRNA(Ile). This is Isoleucine--tRNA ligase from Laribacter hongkongensis (strain HLHK9).